A 170-amino-acid polypeptide reads, in one-letter code: Shikimate kinase (170 aa).

Residue 11 to 16 coordinates ATP; it reads GAGKTT. Residue T15 participates in Mg(2+) binding. D33, R57, and G80 together coordinate substrate. R119 is a binding site for ATP. R141 is a binding site for substrate.

It belongs to the shikimate kinase family. Monomer. It depends on Mg(2+) as a cofactor.

It is found in the cytoplasm. The enzyme catalyses shikimate + ATP = 3-phosphoshikimate + ADP + H(+). It participates in metabolic intermediate biosynthesis; chorismate biosynthesis; chorismate from D-erythrose 4-phosphate and phosphoenolpyruvate: step 5/7. Functionally, catalyzes the specific phosphorylation of the 3-hydroxyl group of shikimic acid using ATP as a cosubstrate. The sequence is that of Shikimate kinase from Azobacteroides pseudotrichonymphae genomovar. CFP2.